Reading from the N-terminus, the 220-residue chain is Superoxide dismutase [Fe] (220 aa).

Residues H26, H73, D164, and H168 each contribute to the Fe cation site.

This sequence belongs to the iron/manganese superoxide dismutase family. In terms of assembly, homodimer. Requires Fe cation as cofactor.

The catalysed reaction is 2 superoxide + 2 H(+) = H2O2 + O2. Functionally, destroys superoxide anion radicals which are normally produced within the cells and which are toxic to biological systems. The polypeptide is Superoxide dismutase [Fe] (sodB) (Campylobacter coli).